The chain runs to 209 residues: Thymidine kinase (209 aa).

ATP contacts are provided by residues 9–16 (SAMNAGKT) and 88–91 (DEAQ). The active-site Proton acceptor is the Glu89.

It belongs to the thymidine kinase family. Homotetramer.

The protein resides in the cytoplasm. It carries out the reaction thymidine + ATP = dTMP + ADP + H(+). The chain is Thymidine kinase from Xanthomonas axonopodis pv. citri (strain 306).